A 505-amino-acid polypeptide reads, in one-letter code: uncharacterized protein (505 aa).

A disordered region spans residues 1–52 (MVDGSIHVPVQSHEGQHDNSSSLNEEIQTSQDPLGIVESYQESSTSDFDKSH). A compositionally biased stretch (polar residues) spans 18 to 32 (DNSSSLNEEIQTSQD). A run of 10 helical transmembrane segments spans residues 141 to 161 (FWIV…TNTF), 173 to 193 (AFQT…YTVF), 208 to 228 (GWKY…VVLA), 235 to 255 (LSAS…SFIF), 265 to 285 (ILGV…DVIS), 290 to 310 (SAVN…CYGV), 326 to 346 (VVIG…TFIF), 362 to 382 (GYLA…PILF), 389 to 409 (FYNI…IHVF), and 415 to 435 (WLYP…HVFV). Serine 463, serine 466, and serine 467 each carry phosphoserine.

It belongs to the SLC35F solute transporter family.

The protein localises to the golgi apparatus membrane. This is an uncharacterized protein from Schizosaccharomyces pombe (strain 972 / ATCC 24843) (Fission yeast).